A 91-amino-acid chain; its full sequence is uncharacterized protein (91 aa).

The protein localises to the plastid. It is found in the chloroplast. This is an uncharacterized protein from Phalaenopsis aphrodite subsp. formosana (Moth orchid).